The chain runs to 155 residues: Isotocin-neurophysin IT 1 (155 aa).

The first 19 residues, 1–19 (MTGTAISVCLLFLLSVCSA), serve as a signal peptide directing secretion. A disulfide bridge links Cys20 with Cys25. At Gly28 the chain carries Glycine amide. 7 cysteine pairs are disulfide-bonded: Cys41/Cys85, Cys44/Cys58, Cys52/Cys75, Cys59/Cys65, Cys92/Cys105, Cys99/Cys117, and Cys106/Cys111.

Belongs to the vasopressin/oxytocin family. Seven disulfide bonds are present in neurophysin.

Functionally, isotocin causes contraction of smooth muscles. The protein is Isotocin-neurophysin IT 1 of Takifugu rubripes (Japanese pufferfish).